A 273-amino-acid chain; its full sequence is 4-hydroxy-tetrahydrodipicolinate reductase (273 aa).

Residues 12–17 (GAGGRM) and Glu-38 each bind NAD(+). Arg-39 is a binding site for NADP(+). NAD(+)-binding positions include 102 to 104 (GTT) and 126 to 129 (AANF). The active-site Proton donor/acceptor is the His-159. A (S)-2,3,4,5-tetrahydrodipicolinate-binding site is contributed by His-160. Lys-163 (proton donor) is an active-site residue. A (S)-2,3,4,5-tetrahydrodipicolinate-binding site is contributed by 169–170 (GT).

Belongs to the DapB family. In terms of assembly, homotetramer.

Its subcellular location is the cytoplasm. The catalysed reaction is (S)-2,3,4,5-tetrahydrodipicolinate + NAD(+) + H2O = (2S,4S)-4-hydroxy-2,3,4,5-tetrahydrodipicolinate + NADH + H(+). It catalyses the reaction (S)-2,3,4,5-tetrahydrodipicolinate + NADP(+) + H2O = (2S,4S)-4-hydroxy-2,3,4,5-tetrahydrodipicolinate + NADPH + H(+). It participates in amino-acid biosynthesis; L-lysine biosynthesis via DAP pathway; (S)-tetrahydrodipicolinate from L-aspartate: step 4/4. Functionally, catalyzes the conversion of 4-hydroxy-tetrahydrodipicolinate (HTPA) to tetrahydrodipicolinate. The protein is 4-hydroxy-tetrahydrodipicolinate reductase of Salmonella choleraesuis (strain SC-B67).